A 178-amino-acid polypeptide reads, in one-letter code: ATP synthase subunit delta (178 aa).

Belongs to the ATPase delta chain family. In terms of assembly, F-type ATPases have 2 components, F(1) - the catalytic core - and F(0) - the membrane proton channel. F(1) has five subunits: alpha(3), beta(3), gamma(1), delta(1), epsilon(1). F(0) has three main subunits: a(1), b(2) and c(10-14). The alpha and beta chains form an alternating ring which encloses part of the gamma chain. F(1) is attached to F(0) by a central stalk formed by the gamma and epsilon chains, while a peripheral stalk is formed by the delta and b chains.

Its subcellular location is the cell membrane. Its function is as follows. F(1)F(0) ATP synthase produces ATP from ADP in the presence of a proton or sodium gradient. F-type ATPases consist of two structural domains, F(1) containing the extramembraneous catalytic core and F(0) containing the membrane proton channel, linked together by a central stalk and a peripheral stalk. During catalysis, ATP synthesis in the catalytic domain of F(1) is coupled via a rotary mechanism of the central stalk subunits to proton translocation. In terms of biological role, this protein is part of the stalk that links CF(0) to CF(1). It either transmits conformational changes from CF(0) to CF(1) or is implicated in proton conduction. This chain is ATP synthase subunit delta, found in Streptococcus thermophilus (strain ATCC BAA-250 / LMG 18311).